The chain runs to 67 residues: Prokaryotic ubiquitin-like protein Pup (67 aa).

The interval 1 to 26 is disordered; it reads MATKETGGQKHATRRNQEVEEIEVTT. Residues 23–61 form an ARC ATPase binding region; sequence EVTTETSVRNEKLAEDVDDILDEIDEVLESNAEDFVRQF. Residues 27–55 are a coiled coil; that stretch reads ETSVRNEKLAEDVDDILDEIDEVLESNAE. Glu67 participates in a covalent cross-link: Isoglutamyl lysine isopeptide (Glu-Lys) (interchain with K-? in acceptor proteins).

The protein belongs to the prokaryotic ubiquitin-like protein family. In terms of assembly, strongly interacts with the proteasome-associated ATPase ARC through a hydrophobic interface; the interacting region of Pup lies in its C-terminal half. There is one Pup binding site per ARC hexamer ring.

The protein operates within protein degradation; proteasomal Pup-dependent pathway. Functionally, protein modifier that is covalently attached to lysine residues of substrate proteins, thereby targeting them for proteasomal degradation. The tagging system is termed pupylation. This is Prokaryotic ubiquitin-like protein Pup from Thermobifida fusca (strain YX).